A 233-amino-acid chain; its full sequence is 7-cyano-7-deazaguanine synthase 2 (233 aa).

8 to 18 (LSGGLDSTTCM) provides a ligand contact to ATP. Zn(2+) contacts are provided by Cys186, Cys194, Cys197, and Cys200.

This sequence belongs to the QueC family. As to quaternary structure, homodimer. Zn(2+) serves as cofactor.

The enzyme catalyses 7-carboxy-7-deazaguanine + NH4(+) + ATP = 7-cyano-7-deazaguanine + ADP + phosphate + H2O + H(+). The protein operates within purine metabolism; 7-cyano-7-deazaguanine biosynthesis. In terms of biological role, catalyzes the ATP-dependent conversion of 7-carboxy-7-deazaguanine (CDG) to 7-cyano-7-deazaguanine (preQ(0)). The chain is 7-cyano-7-deazaguanine synthase 2 from Desulfitobacterium hafniense (strain Y51).